The primary structure comprises 122 residues: Large ribosomal subunit protein uL14c (122 aa).

This sequence belongs to the universal ribosomal protein uL14 family. Part of the 50S ribosomal subunit.

Its subcellular location is the plastid. The protein localises to the chloroplast. Functionally, binds to 23S rRNA. The protein is Large ribosomal subunit protein uL14c of Gossypium barbadense (Sea Island cotton).